Reading from the N-terminus, the 89-residue chain is Small ribosomal subunit protein uS17 (89 aa).

It belongs to the universal ribosomal protein uS17 family. As to quaternary structure, part of the 30S ribosomal subunit.

Functionally, one of the primary rRNA binding proteins, it binds specifically to the 5'-end of 16S ribosomal RNA. This chain is Small ribosomal subunit protein uS17, found in Coxiella burnetii (strain Dugway 5J108-111).